We begin with the raw amino-acid sequence, 78 residues long: Large ribosomal subunit protein bL28 (78 aa).

Residues 1-23 (MSRVCQVSGKRVQTGNNVSHANN) are disordered. Over residues 11 to 22 (RVQTGNNVSHAN) the composition is skewed to polar residues.

Belongs to the bacterial ribosomal protein bL28 family.

This Stenotrophomonas maltophilia (strain R551-3) protein is Large ribosomal subunit protein bL28.